The chain runs to 537 residues: Chaperonin GroEL 2 (537 aa).

Residues 29-32 (TLGP), 86-90 (DGTTT), G413, 477-479 (NAA), and D493 each bind ATP.

It belongs to the chaperonin (HSP60) family. Forms a cylinder of 14 subunits composed of two heptameric rings stacked back-to-back. Interacts with the co-chaperonin GroES.

Its subcellular location is the cytoplasm. It catalyses the reaction ATP + H2O + a folded polypeptide = ADP + phosphate + an unfolded polypeptide.. Its function is as follows. Together with its co-chaperonin GroES, plays an essential role in assisting protein folding. The GroEL-GroES system forms a nano-cage that allows encapsulation of the non-native substrate proteins and provides a physical environment optimized to promote and accelerate protein folding. This is Chaperonin GroEL 2 from Thermobifida fusca (strain YX).